Here is a 30-residue protein sequence, read N- to C-terminus: Cycloviolin-C (30 aa).

Residues 1-30 (GIPCGESCVFIPCLTTVAGCSCKNKVCYRN) constitute a cross-link (cyclopeptide (Gly-Asn)). 3 disulfide bridges follow: Cys-4–Cys-20, Cys-8–Cys-22, and Cys-13–Cys-27.

This is a cyclic peptide.

Probably participates in a plant defense mechanism. Has anti-HIV activity. This is Cycloviolin-C from Leonia cymosa (Sacha uba).